Consider the following 572-residue polypeptide: uncharacterized protein (572 aa).

Residues 543-572 (AYKKSSNTNSTTNSMNPRRSTVSSEDWVLN) are disordered. Positions 547-563 (SSNTNSTTNSMNPRRST) are enriched in low complexity.

This is an uncharacterized protein from Acanthamoeba polyphaga (Amoeba).